The primary structure comprises 87 residues: MANIKSAKKRIKVTETKTLKNRMIKSALKTTIKKFEAAIEAKNNEEAKALFTSVVKSLDMAATKGVVHKNMAARKKSRLAAKLNSMA.

The protein belongs to the bacterial ribosomal protein bS20 family.

Binds directly to 16S ribosomal RNA. This chain is Small ribosomal subunit protein bS20, found in Clostridium beijerinckii (strain ATCC 51743 / NCIMB 8052) (Clostridium acetobutylicum).